We begin with the raw amino-acid sequence, 311 residues long: Ornithine carbamoyltransferase (311 aa).

Residues 54–57 (STRT), Gln-81, Arg-105, and 132–135 (HPCQ) contribute to the carbamoyl phosphate site. Residues Asn-163, Asp-221, and 225–226 (SM) each bind L-ornithine. Residues 261–262 (CL) and Arg-289 each bind carbamoyl phosphate.

Belongs to the aspartate/ornithine carbamoyltransferase superfamily. OTCase family.

It is found in the cytoplasm. It catalyses the reaction carbamoyl phosphate + L-ornithine = L-citrulline + phosphate + H(+). It participates in amino-acid degradation; L-arginine degradation via ADI pathway; carbamoyl phosphate from L-arginine: step 2/2. Reversibly catalyzes the transfer of the carbamoyl group from carbamoyl phosphate (CP) to the N(epsilon) atom of ornithine (ORN) to produce L-citrulline. The polypeptide is Ornithine carbamoyltransferase (Azoarcus sp. (strain BH72)).